Consider the following 141-residue polypeptide: uncharacterized protein (141 aa).

The 136-residue stretch at arginine 4 to lysine 139 folds into the HTH marR-type domain. A DNA-binding region (H-T-H motif) is located at residues valine 53–glutamate 76.

This is an uncharacterized protein from Bacillus subtilis (strain 168).